Consider the following 386-residue polypeptide: Convicilin (386 aa).

A signal peptide spans Met-1–Ala-29. Residues Glu-33–Arg-199 form a disordered region. 4 stretches are compositionally biased toward basic and acidic residues: residues Ala-41–Glu-65, Gln-74–Glu-91, Glu-104–Arg-144, and Glu-153–Glu-186. A Cupin type-1 domain is found at Pro-202–Glu-359. The interval Glu-367–Ser-386 is disordered.

It belongs to the 7S seed storage protein family.

It localises to the vacuole. The protein resides in the aleurone grain. In terms of biological role, seed storage protein. This Pisum sativum (Garden pea) protein is Convicilin (CVCB).